Consider the following 130-residue polypeptide: Small ribosomal subunit protein uS8 (130 aa).

Belongs to the universal ribosomal protein uS8 family. Part of the 30S ribosomal subunit.

In terms of biological role, one of the primary rRNA binding proteins, it binds directly to 16S rRNA central domain where it helps coordinate assembly of the platform of the 30S subunit. This is Small ribosomal subunit protein uS8 from Pyrobaculum islandicum (strain DSM 4184 / JCM 9189 / GEO3).